The chain runs to 434 residues: Nicotinate phosphoribosyltransferase (434 aa).

H242 is modified (phosphohistidine; by autocatalysis).

Belongs to the NAPRTase family. Post-translationally, transiently phosphorylated on a His residue during the reaction cycle. Phosphorylation strongly increases the affinity for substrates and increases the rate of nicotinate D-ribonucleotide production. Dephosphorylation regenerates the low-affinity form of the enzyme, leading to product release.

It catalyses the reaction nicotinate + 5-phospho-alpha-D-ribose 1-diphosphate + ATP + H2O = nicotinate beta-D-ribonucleotide + ADP + phosphate + diphosphate. It functions in the pathway cofactor biosynthesis; NAD(+) biosynthesis; nicotinate D-ribonucleotide from nicotinate: step 1/1. In terms of biological role, catalyzes the synthesis of beta-nicotinate D-ribonucleotide from nicotinate and 5-phospho-D-ribose 1-phosphate at the expense of ATP. The sequence is that of Nicotinate phosphoribosyltransferase from Sinorhizobium medicae (strain WSM419) (Ensifer medicae).